A 206-amino-acid chain; its full sequence is Urease accessory protein UreG (206 aa).

14-21 (GPVGSGKT) contributes to the GTP binding site.

This sequence belongs to the SIMIBI class G3E GTPase family. UreG subfamily. As to quaternary structure, homodimer. UreD, UreF and UreG form a complex that acts as a GTP-hydrolysis-dependent molecular chaperone, activating the urease apoprotein by helping to assemble the nickel containing metallocenter of UreC. The UreE protein probably delivers the nickel.

Its subcellular location is the cytoplasm. Functionally, facilitates the functional incorporation of the urease nickel metallocenter. This process requires GTP hydrolysis, probably effectuated by UreG. The protein is Urease accessory protein UreG of Brucella anthropi (strain ATCC 49188 / DSM 6882 / CCUG 24695 / JCM 21032 / LMG 3331 / NBRC 15819 / NCTC 12168 / Alc 37) (Ochrobactrum anthropi).